The chain runs to 610 residues: Pentatricopeptide repeat-containing protein At3g15590, mitochondrial (610 aa).

The transit peptide at methionine 1 to leucine 71 directs the protein to the mitochondrion. The tract at residues glutamate 88–arginine 142 is disordered. A compositionally biased stretch (acidic residues) spans valine 107–isoleucine 127. The span at glutamate 128–lysine 137 shows a compositional bias: basic and acidic residues. 9 PPR repeats span residues glycine 241 to threonine 275, serine 276 to proline 309, serine 310 to leucine 344, aspartate 345 to glutamine 379, threonine 380 to asparagine 410, arginine 412 to lysine 442, proline 447 to isoleucine 481, glycine 482 to proline 517, and methionine 518 to alanine 552.

It belongs to the PPR family. P subfamily.

It localises to the mitochondrion. In Arabidopsis thaliana (Mouse-ear cress), this protein is Pentatricopeptide repeat-containing protein At3g15590, mitochondrial.